A 256-amino-acid polypeptide reads, in one-letter code: Thiazole synthase (256 aa).

Lysine 95 functions as the Schiff-base intermediate with DXP in the catalytic mechanism. 1-deoxy-D-xylulose 5-phosphate is bound by residues glycine 156, 182 to 183, and 204 to 205; these read AG and NT.

Belongs to the ThiG family. As to quaternary structure, homotetramer. Forms heterodimers with either ThiH or ThiS.

It is found in the cytoplasm. The catalysed reaction is [ThiS sulfur-carrier protein]-C-terminal-Gly-aminoethanethioate + 2-iminoacetate + 1-deoxy-D-xylulose 5-phosphate = [ThiS sulfur-carrier protein]-C-terminal Gly-Gly + 2-[(2R,5Z)-2-carboxy-4-methylthiazol-5(2H)-ylidene]ethyl phosphate + 2 H2O + H(+). The protein operates within cofactor biosynthesis; thiamine diphosphate biosynthesis. In terms of biological role, catalyzes the rearrangement of 1-deoxy-D-xylulose 5-phosphate (DXP) to produce the thiazole phosphate moiety of thiamine. Sulfur is provided by the thiocarboxylate moiety of the carrier protein ThiS. In vitro, sulfur can be provided by H(2)S. In Citrobacter koseri (strain ATCC BAA-895 / CDC 4225-83 / SGSC4696), this protein is Thiazole synthase.